We begin with the raw amino-acid sequence, 72 residues long: Translation initiation factor IF-1 (72 aa).

Positions 2-72 constitute an S1-like domain; sequence AKEDVIEIQG…TKGRITYRFK (71 aa).

This sequence belongs to the IF-1 family. As to quaternary structure, component of the 30S ribosomal translation pre-initiation complex which assembles on the 30S ribosome in the order IF-2 and IF-3, IF-1 and N-formylmethionyl-tRNA(fMet); mRNA recruitment can occur at any time during PIC assembly.

The protein resides in the cytoplasm. Its function is as follows. One of the essential components for the initiation of protein synthesis. Stabilizes the binding of IF-2 and IF-3 on the 30S subunit to which N-formylmethionyl-tRNA(fMet) subsequently binds. Helps modulate mRNA selection, yielding the 30S pre-initiation complex (PIC). Upon addition of the 50S ribosomal subunit IF-1, IF-2 and IF-3 are released leaving the mature 70S translation initiation complex. The protein is Translation initiation factor IF-1 of Lactiplantibacillus plantarum (strain ATCC BAA-793 / NCIMB 8826 / WCFS1) (Lactobacillus plantarum).